Reading from the N-terminus, the 62-residue chain is Large ribosomal subunit protein bL28 (62 aa).

Belongs to the bacterial ribosomal protein bL28 family.

This Aster yellows witches'-broom phytoplasma (strain AYWB) protein is Large ribosomal subunit protein bL28.